Consider the following 87-residue polypeptide: Putative regulatory protein GWCH70_1057 (87 aa).

The protein belongs to the RemA family.

This is Putative regulatory protein GWCH70_1057 from Geobacillus sp. (strain WCH70).